The primary structure comprises 61 residues: Small ribosomal subunit protein uS14B (61 aa).

Residues C24, C27, C40, and C43 each coordinate Zn(2+).

The protein belongs to the universal ribosomal protein uS14 family. Zinc-binding uS14 subfamily. Part of the 30S ribosomal subunit. Contacts proteins S3 and S10. The cofactor is Zn(2+).

Binds 16S rRNA, required for the assembly of 30S particles and may also be responsible for determining the conformation of the 16S rRNA at the A site. In Lactococcus lactis subsp. lactis (strain IL1403) (Streptococcus lactis), this protein is Small ribosomal subunit protein uS14B.